Reading from the N-terminus, the 1010-residue chain is Glycine--tRNA ligase (1010 aa).

The interval 1–312 is glycine--tRNA ligase alpha subunit; that stretch reads MSEHPLTLQS…TSESVVPMIS (312 aa). The segment at 313–1010 is glycine--tRNA ligase beta subunit; it reads STEDLLLEIG…SLCHWESVAV (698 aa).

The protein belongs to the class-II aminoacyl-tRNA synthetase family.

It is found in the cytoplasm. It carries out the reaction tRNA(Gly) + glycine + ATP = glycyl-tRNA(Gly) + AMP + diphosphate. This chain is Glycine--tRNA ligase (glyQS), found in Chlamydia pneumoniae (Chlamydophila pneumoniae).